Here is a 262-residue protein sequence, read N- to C-terminus: Nickel import ATP-binding protein NikD (262 aa).

Residues Leu6–Val249 enclose the ABC transporter domain. Gly42–Ser49 contributes to the ATP binding site.

The protein belongs to the ABC transporter superfamily. Nickel importer (TC 3.A.1.5.3) family. In terms of assembly, the complex is composed of two ATP-binding proteins (NikD and NikE), two transmembrane proteins (NikB and NikC) and a solute-binding protein (NikA).

The protein resides in the cell inner membrane. It carries out the reaction Ni(2+)(out) + ATP + H2O = Ni(2+)(in) + ADP + phosphate + H(+). In terms of biological role, part of the ABC transporter complex NikABCDE involved in nickel import. Responsible for energy coupling to the transport system. The polypeptide is Nickel import ATP-binding protein NikD (Brucella suis biovar 1 (strain 1330)).